We begin with the raw amino-acid sequence, 341 residues long: Putative MAGE domain-containing protein MAGEA13P (341 aa).

Disordered regions lie at residues 1–21 (MPHS…APKE) and 78–101 (KATP…GASQ). Residues 87–97 (ESSRSQEKKDP) show a composition bias toward basic and acidic residues. The 200-residue stretch at 105-304 (LEKKVDELVK…SSFPLLYEEA (200 aa)) folds into the MAGE domain.

In Homo sapiens (Human), this protein is Putative MAGE domain-containing protein MAGEA13P (MAGEA13P).